Here is a 348-residue protein sequence, read N- to C-terminus: Rhodopsin (348 aa).

At Met1 the chain carries N-acetylmethionine. Residues 1–36 are Extracellular-facing; that stretch reads MNGTEGPNFYVPYSNKSGVVRSPYEEPQYYLAEPWM. Residues Asn2 and Asn15 are each glycosylated (N-linked (GlcNAc...) asparagine). A helical transmembrane segment spans residues 37–61; the sequence is FSCLAAYMFMLIVLGFPINFLTLYV. At 62–73 the chain is on the cytoplasmic side; that stretch reads TIQHKKLRTPLN. A helical transmembrane segment spans residues 74–96; that stretch reads YILLNLAVADLFMVICGFTTTLV. Residues 97-110 lie on the Extracellular side of the membrane; sequence TSLNGYFVFGTTGC. A disulfide bridge links Cys110 with Cys187. The chain crosses the membrane as a helical span at residues 111–133; the sequence is LVEGFFATTGGEVALWALVVLAI. The 'Ionic lock' involved in activated form stabilization motif lies at 134-136; sequence ERY. Residues 134–152 lie on the Cytoplasmic side of the membrane; it reads ERYIVVCKPMSNFRFGENH. The helical transmembrane segment at 153–173 threads the bilayer; that stretch reads AIMGVAFTWIMALACSVPPIF. Over 174-202 the chain is Extracellular; the sequence is GWSRYIPEGMQCSCGIDYYTLNPEFNNES. Zn(2+) is bound at residue Glu201. A helical transmembrane segment spans residues 203-224; the sequence is FVIYMFVVHFIIPLTVIFFCYG. Residues 225-252 lie on the Cytoplasmic side of the membrane; it reads QLVFTVKEAAAQQQESATTQKAEKEVTR. The chain crosses the membrane as a helical span at residues 253 to 274; the sequence is MVIIMVIAFLICWVPYASVAFY. Topologically, residues 275–286 are extracellular; it reads IFTHQGSDFGPI. Gln279 contacts Zn(2+). Residues 287–308 form a helical membrane-spanning segment; it reads FMTLPAFFAKSSSIYNPVIYIM. Lys296 bears the N6-(retinylidene)lysine mark. Over 309–348 the chain is Cytoplasmic; the sequence is MNKQFRNCMITTLCCGKNPLGDDEASTTASKTETSQVAPA. Residues Cys322 and Cys323 are each lipidated (S-palmitoyl cysteine). Positions 330-348 are interaction with SAG; sequence DDEASTTASKTETSQVAPA. Residue Ser334 is modified to Phosphoserine. 2 positions are modified to phosphothreonine: Thr335 and Thr336. Ser338 carries the phosphoserine modification. 2 positions are modified to phosphothreonine: Thr340 and Thr342. Ser343 is modified (phosphoserine).

Belongs to the G-protein coupled receptor 1 family. Opsin subfamily. In terms of assembly, homodimer. May form a complex composed of RHO, GRK1 and RCVRN in a Ca(2+)-dependent manner; RCVRN prevents the interaction between GRK1 and RHO. Interacts with GRK1. Interacts (phosphorylated form) with SAG. Interacts with GNAT1. Interacts with GNAT3. SAG and G-proteins compete for a common binding site. Interacts with PRCD; the interaction promotes PRCD stability. Forms a complex with ASAP1 and ARF4. Forms a complex with ASAP1, RAB11A, Rabin8/RAB3IP, ARF4 and RAB11FIP3; the complex regulates Golgi-to-cilia rhodopsin/RHO transport in photoreceptors. Post-translationally, phosphorylated on some or all of the serine and threonine residues present in the C-terminal region. Contains one covalently linked retinal chromophore. Upon light absorption, the covalently bound 11-cis-retinal is converted to all-trans-retinal. After hydrolysis of the Schiff base and release of the covalently bound all-trans-retinal, active rhodopsin is regenerated by binding of a fresh molecule of 11-cis-retinal.

It is found in the membrane. It localises to the cell projection. Its subcellular location is the cilium. The protein resides in the photoreceptor outer segment. Photoreceptor required for image-forming vision at low light intensity. Required for photoreceptor cell viability after birth. Light-induced isomerization of 11-cis to all-trans retinal triggers a conformational change that activates signaling via G-proteins. Subsequent receptor phosphorylation mediates displacement of the bound G-protein alpha subunit by the arrestin SAG and terminates signaling. This Sminthopsis crassicaudata (Fat-tailed dunnart) protein is Rhodopsin (RHO).